The chain runs to 266 residues: Large ribosomal subunit protein eL8 (266 aa).

Residues Lys11, Lys20, and Lys21 each participate in a glycyl lysine isopeptide (Lys-Gly) (interchain with G-Cter in SUMO2) cross-link. Lys34 carries the N6-acetyllysine modification. Residue Lys48 forms a Glycyl lysine isopeptide (Lys-Gly) (interchain with G-Cter in SUMO2) linkage. Lys97 carries the post-translational modification N6-acetyllysine; alternate. A Glycyl lysine isopeptide (Lys-Gly) (interchain with G-Cter in SUMO2); alternate cross-link involves residue Lys97. Lys125 participates in a covalent cross-link: Glycyl lysine isopeptide (Lys-Gly) (interchain with G-Cter in SUMO2). An N6-acetyllysine modification is found at Lys217. Lys245 is covalently cross-linked (Glycyl lysine isopeptide (Lys-Gly) (interchain with G-Cter in SUMO2)).

Belongs to the eukaryotic ribosomal protein eL8 family. In terms of assembly, component of the large ribosomal subunit. Interacts with CRY1. Interacts with DICER1, AGO2, TARBP2, MOV10 and EIF6; they form a large RNA-induced silencing complex (RISC).

Its subcellular location is the cytoplasm. Component of the large ribosomal subunit. The ribosome is a large ribonucleoprotein complex responsible for the synthesis of proteins in the cell. The protein is Large ribosomal subunit protein eL8 (Rpl7a) of Mus musculus (Mouse).